A 381-amino-acid chain; its full sequence is Cytochrome b (381 aa).

The next 4 membrane-spanning stretches (helical) occupy residues Phe-34–Met-54, Trp-78–Ile-99, Trp-114–Leu-134, and Phe-179–Leu-199. The heme b site is built by His-84 and His-98. The heme b site is built by His-183 and His-197. His-202 lines the a ubiquinone pocket. 4 consecutive transmembrane segments (helical) span residues Tyr-227–Leu-247, Leu-289–His-309, Met-321–Gly-341, and Phe-348–Pro-368.

The protein belongs to the cytochrome b family. In terms of assembly, the cytochrome bc1 complex contains 3 respiratory subunits (MT-CYB, CYC1 and UQCRFS1), 2 core proteins (UQCRC1 and UQCRC2) and probably 6 low-molecular weight proteins. It depends on heme b as a cofactor.

The protein localises to the mitochondrion inner membrane. Its function is as follows. Component of the ubiquinol-cytochrome c reductase complex (complex III or cytochrome b-c1 complex) that is part of the mitochondrial respiratory chain. The b-c1 complex mediates electron transfer from ubiquinol to cytochrome c. Contributes to the generation of a proton gradient across the mitochondrial membrane that is then used for ATP synthesis. The polypeptide is Cytochrome b (mt-cyb) (Squalus acanthias (Spiny dogfish)).